A 333-amino-acid chain; its full sequence is Phosphate acyltransferase (333 aa).

This sequence belongs to the PlsX family. In terms of assembly, homodimer. Probably interacts with PlsY.

It localises to the cytoplasm. It carries out the reaction a fatty acyl-[ACP] + phosphate = an acyl phosphate + holo-[ACP]. It functions in the pathway lipid metabolism; phospholipid metabolism. In terms of biological role, catalyzes the reversible formation of acyl-phosphate (acyl-PO(4)) from acyl-[acyl-carrier-protein] (acyl-ACP). This enzyme utilizes acyl-ACP as fatty acyl donor, but not acyl-CoA. The protein is Phosphate acyltransferase of Clostridium botulinum (strain Alaska E43 / Type E3).